The sequence spans 214 residues: rRNA N(6)-adenosine-methyltransferase metl-5 (214 aa).

S-adenosyl-L-methionine-binding positions include Gln-25, Thr-28, Gly-55, Cys-58, Asp-78, and 106–107; that span reads DI.

This sequence belongs to the methyltransferase superfamily. PrmA family. As to quaternary structure, heterodimer; heterodimerizes with TRMT112/C04H5.1.

The catalysed reaction is adenosine in rRNA + S-adenosyl-L-methionine = N(6)-methyladenosine in rRNA + S-adenosyl-L-homocysteine + H(+). Its function is as follows. Catalytic subunit of a heterodimer with TRMT112/C04H5.1, which specifically methylates the 6th position of adenine in position 1717 of 18S rRNA. The sequence is that of rRNA N(6)-adenosine-methyltransferase metl-5 from Caenorhabditis elegans.